The chain runs to 186 residues: Probable RNA 2'-phosphotransferase (186 aa).

It belongs to the KptA/TPT1 family.

Removes the 2'-phosphate from RNA via an intermediate in which the phosphate is ADP-ribosylated by NAD followed by a presumed transesterification to release the RNA and generate ADP-ribose 1''-2''-cyclic phosphate (APPR&gt;P). May function as an ADP-ribosylase. The sequence is that of Probable RNA 2'-phosphotransferase from Pectobacterium carotovorum subsp. carotovorum (strain PC1).